Here is a 116-residue protein sequence, read N- to C-terminus: Spexin (116 aa).

An N-terminal signal peptide occupies residues 1–26 (MKGPSILAVAALALLLVLSVLENSSG). A propeptide spanning residues 27-35 (APQRLSEKR) is cleaved from the precursor. Residue Gln49 is modified to Glutamine amide. 2 propeptides span residues 50–116 (GHRF…RFYW) and 74–116 (PNLQ…RFYW). Residues 56-73 (DQSRRKELADRPPPERRN) show a composition bias toward basic and acidic residues. The disordered stretch occupies residues 56 to 75 (DQSRRKELADRPPPERRNPN).

This sequence belongs to the spexin family. As to expression, widely expressed; predominantly expressed in epithelial cells in the skin, respiratory, digestive, urinary and reproductive systems, retina, adrenal gland and various brain regions. In the adrenal gland, expressed in parenchymal cells of the cortex and in ganglionic cells and intermingled cortical cells of the medulla. Expressed in the type I glomic cells within the carotid body (at protein level). Widely expressed. Strongly expressed in esophagus, liver, pancreas, kidney, brain, hypothalamus, thyroid and ovary. Expressed in the zona glomerulosa (ZG) and zona fasciculata/reticularis (ZF/R) of the adrenal gland. Also expressed in stomach, lung, skeletal muscle, heart, uterus, spleen, adrenal gland and testis. Weakly expressed in small intestine, thymus, urinary bladder and adenohypophysis. In the brain, is expressed in the Barrington's nucleus, with lesser amount in the ventrolateral caudal periaqueductal gray (PAG) and in the mesopontine tegmentum.

The protein localises to the secreted. It is found in the extracellular space. It localises to the cytoplasmic vesicle. The protein resides in the secretory vesicle. Its function is as follows. Plays a role as a central modulator of cardiovascular and renal function and nociception. Also plays a role in energy metabolism and storage. Inhibits adrenocortical cell proliferation with minor stimulation on corticosteroid release. Functionally, acts as a ligand for galanin receptors GALR2 and GALR3. Intracerebroventricular administration of the peptide induces an increase in arterial blood pressure, a decrease in both heart rate and renal excretion and delayed natriuresis. Intraventricular administration of the peptide induces antinociceptive activity. Intraperitoneal administration of the peptide induces a reduction in food consumption and body weight. Inhibits long chain fatty acid uptake into adipocytes. Also induces contraction of muscarinic-like stomach smooth muscles. Intracerebroventricular administration of the peptide induces a decrease in heart rate, but no change in arterial pressure, and an increase in urine flow rate. Intraventricular administration of the peptide induces antinociceptive activity. This Rattus norvegicus (Rat) protein is Spexin (SPX).